The primary structure comprises 370 residues: tRNA/tmRNA (uracil-C(5))-methyltransferase (370 aa).

Gln190, Tyr218, Asn223, Glu239, and Asp299 together coordinate S-adenosyl-L-methionine. The active-site Nucleophile is Cys324. Glu358 acts as the Proton acceptor in catalysis.

The protein belongs to the class I-like SAM-binding methyltransferase superfamily. RNA M5U methyltransferase family. TrmA subfamily.

It carries out the reaction uridine(54) in tRNA + S-adenosyl-L-methionine = 5-methyluridine(54) in tRNA + S-adenosyl-L-homocysteine + H(+). It catalyses the reaction uridine(341) in tmRNA + S-adenosyl-L-methionine = 5-methyluridine(341) in tmRNA + S-adenosyl-L-homocysteine + H(+). Functionally, dual-specificity methyltransferase that catalyzes the formation of 5-methyluridine at position 54 (m5U54) in all tRNAs, and that of position 341 (m5U341) in tmRNA (transfer-mRNA). This Sodalis glossinidius (strain morsitans) protein is tRNA/tmRNA (uracil-C(5))-methyltransferase.